A 365-amino-acid polypeptide reads, in one-letter code: Geranylgeranyl pyrophosphate synthase (365 aa).

Polar residues predominate over residues Met1 to Val11. Positions Met1–Thr36 are disordered. Residues Ser21–Ser34 show a composition bias toward low complexity. Residues Lys78, Arg81, and His110 each contribute to the isopentenyl diphosphate site. Asp117 and Asp121 together coordinate Mg(2+). Arg126 lines the dimethylallyl diphosphate pocket. Arg127 serves as a coordination point for isopentenyl diphosphate. Dimethylallyl diphosphate contacts are provided by Lys211, Thr212, and Gln247. A Mg(2+)-binding site is contributed by Asp250. Dimethylallyl diphosphate-binding residues include Asn254, Lys263, and Lys273.

The protein belongs to the FPP/GGPP synthase family. Mg(2+) serves as cofactor.

The enzyme catalyses isopentenyl diphosphate + dimethylallyl diphosphate = (2E)-geranyl diphosphate + diphosphate. It catalyses the reaction isopentenyl diphosphate + (2E)-geranyl diphosphate = (2E,6E)-farnesyl diphosphate + diphosphate. The catalysed reaction is isopentenyl diphosphate + (2E,6E)-farnesyl diphosphate = (2E,6E,10E)-geranylgeranyl diphosphate + diphosphate. Functionally, geranylgeranyl pyrophosphate synthase that catalyzes the trans-addition of the three molecules of IPP onto DMAPP to form geranylgeranyl pyrophosphate. Does not show any monoterpene nor sesquiterpene synthase activity. In Melampsora lini (Rust fungus), this protein is Geranylgeranyl pyrophosphate synthase.